A 604-amino-acid chain; its full sequence is NADPH oxidase activator (604 aa).

2 TPR repeats span residues S36 to L69 and S71 to H103. 2 disordered regions span residues F180–S298 and D383–V581. 2 stretches are compositionally biased toward low complexity: residues S194 to S215 and P225 to P243. A compositionally biased stretch (pro residues) spans K244–S260. Low complexity predominate over residues S261–L284. Residues K309–I384 enclose the PB1 domain. Composition is skewed to low complexity over residues P396–S424, P435–T453, and F467–S483. A compositionally biased stretch (polar residues) spans L502–Q528. Low complexity predominate over residues S529–S570. Residues P573 to P604 enclose the WW domain.

May function as an activator of NOX1, a superoxide-producing NADPH oxidase. The protein is NADPH oxidase activator (ncfA) of Dictyostelium discoideum (Social amoeba).